A 977-amino-acid polypeptide reads, in one-letter code: Serine/threonine-protein kinase N2 (977 aa).

REM-1 domains lie at N24–V100, D114–I194, and D200–K280. The region spanning P298 to F468 is the C2 domain. Disordered stretches follow at residues G342–S381 and A531–S576. Positions E358–L378 are enriched in polar residues. Positions F650–F909 constitute a Protein kinase domain. Residues L656–V664 and K679 contribute to the ATP site. Catalysis depends on D775, which acts as the Proton acceptor. Positions R910–C977 constitute an AGC-kinase C-terminal domain.

This sequence belongs to the protein kinase superfamily. AGC Ser/Thr protein kinase family. PKC subfamily. Autophosphorylated. Phosphorylated. Post-translationally, proteolytically cleaved.

Its subcellular location is the cytoplasm. The protein resides in the nucleus. It localises to the membrane. The protein localises to the cell projection. It is found in the lamellipodium. Its subcellular location is the cytoskeleton. The protein resides in the cleavage furrow. It localises to the midbody. The protein localises to the cell junction. The enzyme catalyses L-seryl-[protein] + ATP = O-phospho-L-seryl-[protein] + ADP + H(+). The catalysed reaction is L-threonyl-[protein] + ATP = O-phospho-L-threonyl-[protein] + ADP + H(+). Its activity is regulated as follows. Kinase activity is activated upon binding to GTP-bound Rho/Rac GTPases. Activated by lipids, particularly cardiolipin and to a lesser extent by other acidic phospholipids and unsaturated fatty acids. Two specific sites, Thr-809 (activation loop of the kinase domain) and Thr-951 (turn motif), may be needed to be phosphorylated for its full activation. Functionally, pkc-related serine/threonine-protein kinase and Rho/Rac effector protein that participates in specific signal transduction responses in the cell. May play a role in the regulation of cell cycle progression, actin cytoskeleton assembly, cell migration, cell adhesion and transcription activation signaling processes. This Danio rerio (Zebrafish) protein is Serine/threonine-protein kinase N2 (pkn2).